The chain runs to 286 residues: Digeranylgeranylglyceryl phosphate synthase (286 aa).

8 helical membrane-spanning segments follow: residues Ala-21 to Thr-41, Thr-42 to Ile-62, Phe-96 to Ala-116, Leu-133 to Ala-155, Phe-162 to Ile-181, Val-214 to Trp-234, Tyr-235 to Asp-255, and Arg-266 to Ile-286.

Belongs to the UbiA prenyltransferase family. DGGGP synthase subfamily. The cofactor is Mg(2+).

The protein resides in the cell membrane. The enzyme catalyses sn-3-O-(geranylgeranyl)glycerol 1-phosphate + (2E,6E,10E)-geranylgeranyl diphosphate = 2,3-bis-O-(geranylgeranyl)-sn-glycerol 1-phosphate + diphosphate. The protein operates within membrane lipid metabolism; glycerophospholipid metabolism. Its function is as follows. Prenyltransferase that catalyzes the transfer of the geranylgeranyl moiety of geranylgeranyl diphosphate (GGPP) to the C2 hydroxyl of (S)-3-O-geranylgeranylglyceryl phosphate (GGGP). This reaction is the second ether-bond-formation step in the biosynthesis of archaeal membrane lipids. The polypeptide is Digeranylgeranylglyceryl phosphate synthase (Haloquadratum walsbyi (strain DSM 16790 / HBSQ001)).